The chain runs to 129 residues: Transcription antitermination protein NusB (129 aa).

The protein belongs to the NusB family.

Its function is as follows. Involved in transcription antitermination. Required for transcription of ribosomal RNA (rRNA) genes. Binds specifically to the boxA antiterminator sequence of the ribosomal RNA (rrn) operons. This is Transcription antitermination protein NusB from Staphylococcus aureus (strain USA300 / TCH1516).